Consider the following 297-residue polypeptide: Homoserine kinase (297 aa).

82 to 92 serves as a coordination point for ATP; it reads PVSRGLGSSAA.

The protein belongs to the GHMP kinase family. Homoserine kinase subfamily.

It localises to the cytoplasm. It carries out the reaction L-homoserine + ATP = O-phospho-L-homoserine + ADP + H(+). Its pathway is amino-acid biosynthesis; L-threonine biosynthesis; L-threonine from L-aspartate: step 4/5. Catalyzes the ATP-dependent phosphorylation of L-homoserine to L-homoserine phosphate. The protein is Homoserine kinase of Clostridium botulinum (strain Kyoto / Type A2).